Consider the following 94-residue polypeptide: Translation initiation factor 1A 2 (94 aa).

Residues 6–80 (GRRNLRMPND…EKANVEWRYS (75 aa)) form the S1-like domain.

The protein belongs to the eIF-1A family.

Seems to be required for maximal rate of protein biosynthesis. Enhances ribosome dissociation into subunits and stabilizes the binding of the initiator Met-tRNA(I) to 40 S ribosomal subunits. The chain is Translation initiation factor 1A 2 (eIF1A2) from Halobacterium salinarum (strain ATCC 700922 / JCM 11081 / NRC-1) (Halobacterium halobium).